Consider the following 169-residue polypeptide: Co-chaperone protein HscB homolog (169 aa).

The J domain occupies 2–74; sequence NYFDLFSLPV…CLRAQYLLLL (73 aa).

Belongs to the HscB family. As to quaternary structure, interacts with HscA and stimulates its ATPase activity.

Its function is as follows. Co-chaperone involved in the maturation of iron-sulfur cluster-containing proteins. Seems to help targeting proteins to be folded toward HscA. This Psychromonas ingrahamii (strain DSM 17664 / CCUG 51855 / 37) protein is Co-chaperone protein HscB homolog.